The following is a 326-amino-acid chain: F-box/LRR-repeat protein 12 (326 aa).

The 47-residue stretch at 1–47 (MATLFDLPDLVLLEIFSYLPVRDRIRISRVCHRWKRLVDDRWLWRHV) folds into the F-box domain. 8 LRR repeats span residues 51-78 (LYTM…RMGG), 86-111 (APQL…CLHV), 113-133 (DLSM…ELHS), 161-185 (VPAF…VLGG), 186-211 (TYRV…EVLG), 212-236 (CTLS…IRLT), 237-261 (VGGL…CFQG), and 266-291 (PDMP…EVQG).

Interacts with SKP1 and CUL1.

Its pathway is protein modification; protein ubiquitination. Its function is as follows. Substrate-recognition component of the SCF (SKP1-CUL1-F-box protein)-type E3 ubiquitin ligase complex. Mediates the polyubiquitination and proteasomal degradation of CAMK1 leading to disruption of cyclin D1/CDK4 complex assembly which results in G1 cell cycle arrest in lung epithelia. The sequence is that of F-box/LRR-repeat protein 12 (Fbxl12) from Mus musculus (Mouse).